An 89-amino-acid chain; its full sequence is uncharacterized protein (89 aa).

This is an uncharacterized protein from Klebsiella aerogenes (Enterobacter aerogenes).